A 168-amino-acid chain; its full sequence is Large ribosomal subunit protein uL24 (168 aa).

The tract at residues 112–168 (LEGKDPRKQPKEAPKAAEKPAKEEPKKETPKAEEKPAKEEPKETKVEKKSEEKEDEN) is disordered.

This sequence belongs to the universal ribosomal protein uL24 family. As to quaternary structure, part of the 50S ribosomal subunit.

One of two assembly initiator proteins, it binds directly to the 5'-end of the 23S rRNA, where it nucleates assembly of the 50S subunit. In terms of biological role, located at the polypeptide exit tunnel on the outside of the subunit. In Nitrosopumilus maritimus (strain SCM1), this protein is Large ribosomal subunit protein uL24.